Here is a 307-residue protein sequence, read N- to C-terminus: Glutathione synthetase (307 aa).

An ATP-grasp domain is found at 120 to 304 (KLGALRFSRW…LADQTIERLR (185 aa)). 146–202 (AREQGDVVLKPLGGRAGLGVIRVQAEAPGLKALLELVTEQERLPVMAQRFLPDVTEG) serves as a coordination point for ATP. The Mg(2+) site is built by E275 and N277.

It belongs to the prokaryotic GSH synthase family. Mg(2+) serves as cofactor. Requires Mn(2+) as cofactor.

The enzyme catalyses gamma-L-glutamyl-L-cysteine + glycine + ATP = glutathione + ADP + phosphate + H(+). It participates in sulfur metabolism; glutathione biosynthesis; glutathione from L-cysteine and L-glutamate: step 2/2. The sequence is that of Glutathione synthetase from Parasynechococcus marenigrum (strain WH8102).